The following is a 95-amino-acid chain: MELVLVFLCSLLAPMVLASTAEKEKEMDPFHYDYQTLRIGGLVFAVVLFSVGILLILSRRCKCSFNQKPRAPGDEEAQVENLITANATEPQKAEN.

An N-terminal signal peptide occupies residues 1–18; the sequence is MELVLVFLCSLLAPMVLA. At 19–35 the chain is on the extracellular side; that stretch reads STAEKEKEMDPFHYDYQ. Residues 36-58 form a helical membrane-spanning segment; that stretch reads TLRIGGLVFAVVLFSVGILLILS. At 59 to 95 the chain is on the cytoplasmic side; the sequence is RRCKCSFNQKPRAPGDEEAQVENLITANATEPQKAEN.

This sequence belongs to the FXYD family. As to quaternary structure, regulatory subunit of the sodium/potassium-transporting ATPase which is composed of a catalytic alpha subunit, a non-catalytic beta subunit and an additional regulatory subunit. The regulatory subunit, a member of the FXYD protein family, modulates the enzymatic activity in a tissue- and isoform-specific way by changing affinities of the Na+/K+-ATPase toward Na(+), K(+) or ATP.

It is found in the cell membrane. Its function is as follows. Associates with and regulates the activity of the sodium/potassium-transporting ATPase (NKA) which catalyzes the hydrolysis of ATP coupled with the exchange of Na(+) and K(+) ions across the plasma membrane. Reduces the apparent affinity for intracellular Na(+) with no change in the apparent affinity for extracellular K(+). In addition to modulating NKA kinetics, may also function as a regulator of NKA localization to the plasma membrane. This is FXYD domain-containing ion transport regulator 6 (FXYD6) from Macaca fascicularis (Crab-eating macaque).